A 363-amino-acid polypeptide reads, in one-letter code: Chorismate synthase (363 aa).

An NADP(+)-binding site is contributed by Arg-47. FMN is bound by residues 124–126 (RSS), Gly-285, 300–304 (KPTAT), and Arg-326.

The protein belongs to the chorismate synthase family. In terms of assembly, homotetramer. It depends on FMNH2 as a cofactor.

The catalysed reaction is 5-O-(1-carboxyvinyl)-3-phosphoshikimate = chorismate + phosphate. It participates in metabolic intermediate biosynthesis; chorismate biosynthesis; chorismate from D-erythrose 4-phosphate and phosphoenolpyruvate: step 7/7. In terms of biological role, catalyzes the anti-1,4-elimination of the C-3 phosphate and the C-6 proR hydrogen from 5-enolpyruvylshikimate-3-phosphate (EPSP) to yield chorismate, which is the branch point compound that serves as the starting substrate for the three terminal pathways of aromatic amino acid biosynthesis. This reaction introduces a second double bond into the aromatic ring system. The chain is Chorismate synthase from Opitutus terrae (strain DSM 11246 / JCM 15787 / PB90-1).